Consider the following 453-residue polypeptide: MATKIVLVGAGSAQFGYGTLGDIFQSRALYGSEIILHDINPVALAVTEKTAKDFLAKEDLPFIVSATTDRRTALRGAEFVIISIEVGDRFALWDLDWQIPQQYGIQQVYGENGGPGGLFHSLRIIPPILDICADVADICPDAWIFNYSNPMSRICTTVHRRFPELNFVGMCHEIASLERYLPEMLNTSFDNLSLRAGGLNHFSVLLDARYKDSGKDAYADVRAKAPDYFASLPGYSDILAYTRQHGKLVDTEGSTERHALGGKDSSYPWADRTLFKEILEKFHCMPITVDSHFGEYISWAGEVSDHRGILDFYTFYRNYLGGVQPKIELKLKERVVSIMEGILTDSGYEEAAVNIPNRGFIKQLPEFIAVEVPAIIDRKGVHGIQVDIPPGIGGLLSNQIAIHDLTAEAIIAGSRDLVIQALLVDSVNNQCRAIPELVDVMISRQQPWLNYLK.

NAD(+) is bound at residue 3-69 (TKIVLVGAGS…LPFIVSATTD (67 aa)). Substrate is bound at residue Asn149. Cys171 serves as a coordination point for Mn(2+). His172 serves as the catalytic Proton donor. Residue His201 coordinates Mn(2+).

In terms of assembly, homotetramer. The cofactor is Mn(2+). Requires Co(2+) as cofactor. It depends on Ca(2+) as a cofactor. Fe(2+) serves as cofactor. Mg(2+) is required as a cofactor. The cofactor is Sr(2+). Requires Ni(2+) as cofactor. It depends on NAD(+) as a cofactor.

The catalysed reaction is Hydrolysis of terminal, non-reducing (1-&gt;4)-linked alpha-D-glucose residues with release of alpha-D-glucose.. Its pathway is glycan degradation; palatinose degradation. With respect to regulation, is inhibited by EDTA in vitro. Functionally, alpha-glucosidase with broad specificity. Hydrolyzes maltose, palatinose, maltulose, trehalose, trehalulose, turanose, leucrose, sucrose and maltitol. Is not active against alpha-galactosides, e.g. melibiose, and alpha-mannosides. Shows an obligate requirement for an O-alpha-glycosidic linkage, since it is not able to cleave beta-glycosidic bonds (cellobiose, gentiobiose, lactose, sophorose or laminaribiose). Cannot hydrolyze phosphorylated alpha-glucosides derivatives. Seems to be involved in the degradation of palatinose, a sucrose isomer that is formed as a reserve material under conditions of excess carbon availability, sequestered in a form unavailable to competitors such as fungi or the host plant, and whose consumption appears to be postponed until the preferentially metabolized carbon source (e.g. sucrose) is depleted. This is Alpha-glucosidase (palH) from Erwinia rhapontici (Pectobacterium rhapontici).